The sequence spans 151 residues: Late embryogenesis abundant protein Lea14-A (151 aa).

This sequence belongs to the LEA type 2 family.

The polypeptide is Late embryogenesis abundant protein Lea14-A (LEA14-A) (Gossypium hirsutum (Upland cotton)).